The following is a 172-amino-acid chain: Ribosome maturation factor RimM (172 aa).

The PRC barrel domain occupies 96–169 (PDEFYDHQLE…AIEIDPPEGL (74 aa)).

The protein belongs to the RimM family. Binds ribosomal protein uS19.

It localises to the cytoplasm. An accessory protein needed during the final step in the assembly of 30S ribosomal subunit, possibly for assembly of the head region. Essential for efficient processing of 16S rRNA. May be needed both before and after RbfA during the maturation of 16S rRNA. It has affinity for free ribosomal 30S subunits but not for 70S ribosomes. This Mycolicibacterium vanbaalenii (strain DSM 7251 / JCM 13017 / BCRC 16820 / KCTC 9966 / NRRL B-24157 / PYR-1) (Mycobacterium vanbaalenii) protein is Ribosome maturation factor RimM.